The chain runs to 337 residues: Diacylglycerol O-acyltransferase 2-like protein 6 (337 aa).

Transmembrane regions (helical) follow at residues 22-42 (IPVY…FLLF) and 102-122 (YIIA…NFAT).

This sequence belongs to the diacylglycerol acyltransferase family. As to expression, expressed in all tissues tested except pancreas.

The protein resides in the endoplasmic reticulum membrane. It catalyses the reaction 1,2-di-(9Z-octadecenoyl)-sn-glycerol + (9Z)-octadecenoyl-CoA = 1,2,3-tri-(9Z-octadecenoyl)-glycerol + CoA. The enzyme catalyses 1-O-(9Z-octadecenyl)-glycerol + (9Z)-octadecenoyl-CoA = 1-O-(9Z-octadecyl)-3-(9Z-octadecenoyl)-glycerol + CoA. It carries out the reaction 1-(9Z-octadecenoyl)-glycerol + (9Z)-octadecenoyl-CoA = 1,2-di-(9Z-octadecenoyl)-glycerol + CoA. Its function is as follows. Diglyceride acyltransferase that uses fatty acyl-CoA as substrate. Particularly active with oleate as a substrate. Has no wax synthase activity to produce wax esters. Able to use 1-monoalkylglycerol (1-MAkG) as an acyl acceptor for the synthesis of monoalkyl-monoacylglycerol (MAMAG). The protein is Diacylglycerol O-acyltransferase 2-like protein 6 of Homo sapiens (Human).